Here is a 138-residue protein sequence, read N- to C-terminus: Basic phospholipase A2 Tpu-G6D49 (138 aa).

The N-terminal stretch at 1–16 (MRTLWIMAVLLVGVEG) is a signal peptide. 7 cysteine pairs are disulfide-bonded: Cys-42–Cys-131, Cys-44–Cys-60, Cys-59–Cys-111, Cys-65–Cys-138, Cys-66–Cys-104, Cys-73–Cys-97, and Cys-91–Cys-102. The Ca(2+) site is built by Tyr-43, Gly-45, and Gly-47. Residue His-63 is part of the active site. Asp-64 contacts Ca(2+). Asp-105 is an active-site residue.

In terms of assembly, monomer. Ca(2+) is required as a cofactor. In terms of tissue distribution, expressed by the venom gland.

It is found in the secreted. The enzyme catalyses a 1,2-diacyl-sn-glycero-3-phosphocholine + H2O = a 1-acyl-sn-glycero-3-phosphocholine + a fatty acid + H(+). Snake venom phospholipase A2 (PLA2) that impairs hemostasis. It weakly inhibits ADP-induced platelet aggregation when tested on platelet rich plasma from human and rabbit blood (15-25% of inhibition at 5-10 ug of enzyme), and dose-dependently inhibits blood coagulation, possibly by inhibiting thrombin activation. Also induces local edema a few hours after injection in the hind foot. Exhibits high hydrolytic activities toward L-dipalmitoyl phosphatidylcholine. PLA2 catalyzes the calcium-dependent hydrolysis of the 2-acyl groups in 3-sn-phosphoglycerides. The chain is Basic phospholipase A2 Tpu-G6D49 from Craspedocephalus puniceus (Flat-nosed pitviper).